A 251-amino-acid polypeptide reads, in one-letter code: MEKIMSNKFNNKVALITGAGSGIGKSTALLLAQQGVSVVVSDINLEAAQKVVDEIVALGGKAAANKANTAEPEDMKAAVEFAVSTFGALHLAFNNAGILGEVNSTEELSIEGWRRVIDVNLNAVFYSMHYEVPAILAAGGGAIVNTASIAGLIGIQNISGYVAAKHGVTGLTKAAALEYADKGIRINSVHPGYIKTPLIAEFEEAEMVKLHPIGRLGQPEEVAQVVAFLLSDDASFVTGSQYVVDGAYTSK.

The NAD(+) site is built by D42, N95, Y161, K165, I194, and T196. Y161 (proton acceptor) is an active-site residue.

It belongs to the short-chain dehydrogenases/reductases (SDR) family.

It carries out the reaction cyclohexanol + NAD(+) = cyclohexanone + NADH + H(+). Its function is as follows. Catalyzes the oxidation of cyclohexanol to cyclohexanone. Required for the conversion of cyclohexanol to adipic acid. The sequence is that of Cyclohexanol dehydrogenase from Acinetobacter sp. (strain SE19).